The following is a 157-amino-acid chain: SsrA-binding protein (157 aa).

The disordered stretch occupies residues 132 to 157 (EHDKRDTIKEREGKREVERAMKSRHR).

It belongs to the SmpB family.

It localises to the cytoplasm. Functionally, required for rescue of stalled ribosomes mediated by trans-translation. Binds to transfer-messenger RNA (tmRNA), required for stable association of tmRNA with ribosomes. tmRNA and SmpB together mimic tRNA shape, replacing the anticodon stem-loop with SmpB. tmRNA is encoded by the ssrA gene; the 2 termini fold to resemble tRNA(Ala) and it encodes a 'tag peptide', a short internal open reading frame. During trans-translation Ala-aminoacylated tmRNA acts like a tRNA, entering the A-site of stalled ribosomes, displacing the stalled mRNA. The ribosome then switches to translate the ORF on the tmRNA; the nascent peptide is terminated with the 'tag peptide' encoded by the tmRNA and targeted for degradation. The ribosome is freed to recommence translation, which seems to be the essential function of trans-translation. This chain is SsrA-binding protein, found in Paracidovorax citrulli (strain AAC00-1) (Acidovorax citrulli).